Here is a 351-residue protein sequence, read N- to C-terminus: MLKFIQNNREGTALLAILTLFALLGIIDRNYFSLQTFTMIFSSAQILILLAIGATLVMLTRNIDVSVGSITGLCAVTVGMALNAGFGLAASCLFALLVGMVAGFFNGILVTWLRIPAIVATLGTLGLYRGLMLLLTGGKWIEGLPADLKSLSTPILFSISPIGWLAMLLILAMAWLLGNTAFGRSFYATGDNLQGARQLGVRTDSIRIFAFSMNGVMAALAGIVFASQIGFIPNQTGNGLEMKAIAACVLGGISLLGGTGTIIGAILGAFLLTQIDSVLVLLRLPAWWNDFITGLVLLGVLVFDGRLRCAVERNIRQQKYARFTARAIISDKKTTVSDNTPAASNKKKAAL.

The next 9 helical transmembrane spans lie at 14 to 34, 39 to 59, 70 to 90, 93 to 113, 115 to 135, 155 to 175, 213 to 233, 252 to 272, and 284 to 304; these read LLAI…YFSL, MIFS…LVML, ITGL…GLAA, LFAL…VTWL, IPAI…MLLL, ILFS…AMAW, MNGV…GFIP, GISL…AFLL, and LPAW…LVFD.

This sequence belongs to the binding-protein-dependent transport system permease family. AraH/RbsC subfamily. As to quaternary structure, the complex is composed of two ATP-binding proteins (LsrA), two transmembrane proteins (LsrC and LsrD) and a solute-binding protein (LsrB).

The protein localises to the cell inner membrane. Part of the ABC transporter complex LsrABCD involved in autoinducer 2 (AI-2) import. Probably responsible for the translocation of the substrate across the membrane. This chain is Autoinducer 2 import system permease protein LsrC (lsrC), found in Yersinia pseudotuberculosis serotype O:1b (strain IP 31758).